A 182-amino-acid chain; its full sequence is ATP synthase subunit delta (182 aa).

This sequence belongs to the ATPase delta chain family. In terms of assembly, F-type ATPases have 2 components, F(1) - the catalytic core - and F(0) - the membrane proton channel. F(1) has five subunits: alpha(3), beta(3), gamma(1), delta(1), epsilon(1). F(0) has three main subunits: a(1), b(2) and c(10-14). The alpha and beta chains form an alternating ring which encloses part of the gamma chain. F(1) is attached to F(0) by a central stalk formed by the gamma and epsilon chains, while a peripheral stalk is formed by the delta and b chains.

The protein localises to the cell inner membrane. In terms of biological role, f(1)F(0) ATP synthase produces ATP from ADP in the presence of a proton or sodium gradient. F-type ATPases consist of two structural domains, F(1) containing the extramembraneous catalytic core and F(0) containing the membrane proton channel, linked together by a central stalk and a peripheral stalk. During catalysis, ATP synthesis in the catalytic domain of F(1) is coupled via a rotary mechanism of the central stalk subunits to proton translocation. Functionally, this protein is part of the stalk that links CF(0) to CF(1). It either transmits conformational changes from CF(0) to CF(1) or is implicated in proton conduction. The chain is ATP synthase subunit delta from Histophilus somni (strain 2336) (Haemophilus somnus).